A 173-amino-acid chain; its full sequence is Shikimate kinase 1 (173 aa).

14–19 (GAGKST) is a binding site for ATP. Position 18 (Ser-18) interacts with Mg(2+). Substrate contacts are provided by Asp-36, Arg-60, and Gly-82. Arg-120 serves as a coordination point for ATP. Arg-140 provides a ligand contact to substrate. Gln-157 is an ATP binding site.

This sequence belongs to the shikimate kinase family. Monomer. Mg(2+) is required as a cofactor.

Its subcellular location is the cytoplasm. The enzyme catalyses shikimate + ATP = 3-phosphoshikimate + ADP + H(+). Its pathway is metabolic intermediate biosynthesis; chorismate biosynthesis; chorismate from D-erythrose 4-phosphate and phosphoenolpyruvate: step 5/7. Catalyzes the specific phosphorylation of the 3-hydroxyl group of shikimic acid using ATP as a cosubstrate. The sequence is that of Shikimate kinase 1 from Enterobacter sp. (strain 638).